Here is a 149-residue protein sequence, read N- to C-terminus: Aquaporin-like protein 2 (149 aa).

The segment at 1 to 35 (MSNESNDLEKNISHLDPTGVDNAYIPPEQPETKHS) is disordered. Topologically, residues 1–47 (MSNESNDLEKNISHLDPTGVDNAYIPPEQPETKHSRFNIDRDTLRNH) are cytoplasmic. The helical transmembrane segment at 48–68 (FIAAVGEFCGTFMFLWCAYVI) threads the bilayer. Topologically, residues 69 to 89 (CNVANHDVALTTEPEGSHPGQ) are extracellular. Residues 90–110 (LIMIALGFGFSVMFSIWCFWW) traverse the membrane as a helical segment. Residues 111-149 (GFEPSRFSLFVFGQSHLSSQMCSDVVSSDHCWDGCWWCR) are Cytoplasmic-facing.

It belongs to the MIP/aquaporin (TC 1.A.8) family.

The protein localises to the endoplasmic reticulum membrane. Its subcellular location is the cell membrane. In terms of biological role, water channel required to facilitate the transport of water across membranes. Involved in freeze tolerance, osmotolerance and cell flocculation in liquid cultures. Is non-functional in most laboratory strains. The polypeptide is Aquaporin-like protein 2 (AQY2-2) (Saccharomyces cerevisiae (strain RM11-1a) (Baker's yeast)).